Here is a 471-residue protein sequence, read N- to C-terminus: ATP synthase subunit beta (471 aa).

158–165 (GGAGCGKT) serves as a coordination point for ATP.

It belongs to the ATPase alpha/beta chains family. In terms of assembly, F-type ATPases have 2 components, CF(1) - the catalytic core - and CF(0) - the membrane proton channel. CF(1) has five subunits: alpha(3), beta(3), gamma(1), delta(1), epsilon(1). CF(0) has three main subunits: a(1), b(2) and c(9-12). The alpha and beta chains form an alternating ring which encloses part of the gamma chain. CF(1) is attached to CF(0) by a central stalk formed by the gamma and epsilon chains, while a peripheral stalk is formed by the delta and b chains.

It is found in the cell inner membrane. The enzyme catalyses ATP + H2O + 4 H(+)(in) = ADP + phosphate + 5 H(+)(out). Produces ATP from ADP in the presence of a proton gradient across the membrane. The catalytic sites are hosted primarily by the beta subunits. This chain is ATP synthase subunit beta, found in Desulfotalea psychrophila (strain LSv54 / DSM 12343).